Consider the following 1768-residue polypeptide: Maestro heat-like repeat-containing protein family member 1 homolog (1768 aa).

HEAT repeat units follow at residues Thr-4–Asn-47, Val-164–Ser-203, Gln-816–Pro-856, Gln-1166–Ala-1204, Glu-1483–Thr-1521, and Thr-1731–His-1768.

It belongs to the MROH1 family. In terms of assembly, homooligomer; homooligomerizes at lysosome scission sites.

The protein resides in the lysosome membrane. Its function is as follows. Lysosome fission factor. Recruited to lysosomes by rab-7 at scission sites and homooligomerizes to mediate the constriction and scission of lysosomal tubules. May sever membranes by inserting amphipathic helices into one bilayer leaflet. Lysosome fission is required to maintain their steady-state number, shape, size, composition and function, and to accomplish regeneration. In Caenorhabditis elegans, this protein is Maestro heat-like repeat-containing protein family member 1 homolog.